The following is a 494-amino-acid chain: ATP synthase subunit alpha, chloroplastic (494 aa).

Position 170-177 (170-177 (GDRQTGKT)) interacts with ATP.

This sequence belongs to the ATPase alpha/beta chains family. As to quaternary structure, F-type ATPases have 2 components, CF(1) - the catalytic core - and CF(0) - the membrane proton channel. CF(1) has five subunits: alpha(3), beta(3), gamma(1), delta(1), epsilon(1). CF(0) has four main subunits: a, b, b' and c.

It localises to the plastid. The protein resides in the chloroplast thylakoid membrane. It catalyses the reaction ATP + H2O + 4 H(+)(in) = ADP + phosphate + 5 H(+)(out). In terms of biological role, produces ATP from ADP in the presence of a proton gradient across the membrane. The alpha chain is a regulatory subunit. The protein is ATP synthase subunit alpha, chloroplastic of Pinus thunbergii (Japanese black pine).